Reading from the N-terminus, the 433-residue chain is Putative zinc metalloprotease BB_0118 (433 aa).

His17 contacts Zn(2+). Glu18 is a catalytic residue. Residue His21 participates in Zn(2+) binding. Residues 98–120 (ILIYFAGPLFNLIFSFIVFIFIS) form a helical membrane-spanning segment. The PDZ domain maps to 193-265 (TVSLQDFLKE…VVEIKFSRNG (73 aa)). A run of 3 helical transmembrane segments spans residues 334 to 356 (VSGPVGIVGILSSSYSLGILYWI), 366 to 388 (LAGMNLFFIVIPIFDGGQIFISF), and 401 to 423 (TIYSFYSFGIFFGLFLFGLGLFN).

Belongs to the peptidase M50B family. It depends on Zn(2+) as a cofactor.

It is found in the cell inner membrane. The protein is Putative zinc metalloprotease BB_0118 of Borreliella burgdorferi (strain ATCC 35210 / DSM 4680 / CIP 102532 / B31) (Borrelia burgdorferi).